Here is an 83-residue protein sequence, read N- to C-terminus: Small ribosomal subunit protein bS16 (83 aa).

It belongs to the bacterial ribosomal protein bS16 family.

In Syntrophus aciditrophicus (strain SB), this protein is Small ribosomal subunit protein bS16.